Reading from the N-terminus, the 350-residue chain is Ion-translocating oxidoreductase complex subunit D (350 aa).

Helical transmembrane passes span 20–40 (IMML…WFFG), 42–62 (GTLF…AAVL), 68–88 (PIAA…LAVS), 89–109 (IPPL…VIIA), and 123–143 (PAMI…TSWL). An FMN phosphoryl threonine modification is found at Thr-187. 5 helical membrane passes run 215–235 (LAGA…VWLL), 244–264 (IPVS…AFAG), 267–287 (LASP…FFIL), 301–321 (LIFG…GGYP), and 322–342 (DGVA…DYYT).

The protein belongs to the NqrB/RnfD family. The complex is composed of six subunits: RnfA, RnfB, RnfC, RnfD, RnfE and RnfG. Requires FMN as cofactor.

The protein resides in the cell inner membrane. In terms of biological role, part of a membrane-bound complex that couples electron transfer with translocation of ions across the membrane. The polypeptide is Ion-translocating oxidoreductase complex subunit D (Citrobacter koseri (strain ATCC BAA-895 / CDC 4225-83 / SGSC4696)).